Reading from the N-terminus, the 437-residue chain is Serine--tRNA ligase (437 aa).

227 to 229 (TAE) contacts L-serine. ATP contacts are provided by residues 258 to 260 (RSE) and Val274. Position 281 (Glu281) interacts with L-serine. Position 347–350 (347–350 (ETHS)) interacts with ATP. Thr382 lines the L-serine pocket.

It belongs to the class-II aminoacyl-tRNA synthetase family. Type-1 seryl-tRNA synthetase subfamily. In terms of assembly, homodimer. The tRNA molecule binds across the dimer.

It is found in the cytoplasm. The enzyme catalyses tRNA(Ser) + L-serine + ATP = L-seryl-tRNA(Ser) + AMP + diphosphate + H(+). It catalyses the reaction tRNA(Sec) + L-serine + ATP = L-seryl-tRNA(Sec) + AMP + diphosphate + H(+). It participates in aminoacyl-tRNA biosynthesis; selenocysteinyl-tRNA(Sec) biosynthesis; L-seryl-tRNA(Sec) from L-serine and tRNA(Sec): step 1/1. Functionally, catalyzes the attachment of serine to tRNA(Ser). Is also able to aminoacylate tRNA(Sec) with serine, to form the misacylated tRNA L-seryl-tRNA(Sec), which will be further converted into selenocysteinyl-tRNA(Sec). The sequence is that of Serine--tRNA ligase from Deinococcus geothermalis (strain DSM 11300 / CIP 105573 / AG-3a).